We begin with the raw amino-acid sequence, 397 residues long: MANHNAEIEEIRKRQRAQGPANILAIGTATPSNCVYQADYPDYYFRITNSEHMSDLKLKFKRMCEKSMIRKRYMHITEEYLKENPNVCAYEAPSLDARQDLVVVEVPRLGKEAAAKAIKEWGHPKSKITHLIFCTTSGVDMPGADYQLTKLLGLRPSVKRFMMYQQGCFAGGTVLRLAKDLAENNTGARVLVVCSEITAVTFRGPSDSHLDSLVGQALFGDGAAAVIVGSDPDLSVERPLFQLISAAQTILPDSDGAIDGHLREVGLTFHLLKDVPGLISKNIEKSLKEAFGPIGISDWNSLFWIAHPGGPAILDQVELKLGLKEEKMRATRQVLSDYGNMSSACVLFILDEMRKKSIEEGKATTGDGLDWGVLFGFGPGLTVETVVLHSVPATITH.

Cys-168 is a catalytic residue.

This sequence belongs to the thiolase-like superfamily. Chalcone/stilbene synthases family.

The catalysed reaction is (E)-4-coumaroyl-CoA + 3 malonyl-CoA + 3 H(+) = 2',4,4',6'-tetrahydroxychalcone + 3 CO2 + 4 CoA. The protein operates within secondary metabolite biosynthesis; flavonoid biosynthesis. The primary product of this enzyme is 4,2',4',6'-tetrahydroxychalcone (also termed naringenin-chalcone or chalcone) which can under specific conditions spontaneously isomerize into naringenin. The chain is Chalcone synthase 2 (CHS2) from Daucus carota (Wild carrot).